Consider the following 264-residue polypeptide: Putative serine carboxypeptidase-like 53 (264 aa).

Positions 1 to 23 (MGKLQDWSITTCLFLFFLHASQT) are cleaved as a signal peptide. N-linked (GlcNAc...) asparagine glycosylation is found at Asn65, Asn101, Asn153, and Asn184.

It belongs to the peptidase S10 family.

It localises to the secreted. This chain is Putative serine carboxypeptidase-like 53 (SCPL53), found in Arabidopsis thaliana (Mouse-ear cress).